Here is a 737-residue protein sequence, read N- to C-terminus: Photosystem I P700 chlorophyll a apoprotein A2 (737 aa).

The next 8 membrane-spanning stretches (helical) occupy residues Leu46–Ala69, Leu135–Gln158, Leu175–Ile199, Ile273–Tyr291, Leu333–Tyr356, Ala372–Ile398, Ala420–His442, and Phe520–Val538. The [4Fe-4S] cluster site is built by Cys562 and Cys571. The next 2 helical transmembrane spans lie at Ala578–Trp599 and Leu646–Ile668. Residues His657, Met665, and Tyr673 each coordinate chlorophyll a. Trp674 provides a ligand contact to phylloquinone. The chain crosses the membrane as a helical span at residues Val710 to Ala730.

It belongs to the PsaA/PsaB family. In terms of assembly, the PsaA/B heterodimer binds the P700 chlorophyll special pair and subsequent electron acceptors. PSI consists of a core antenna complex that captures photons, and an electron transfer chain that converts photonic excitation into a charge separation. The cyanobacterial PSI reaction center is composed of one copy each of PsaA,B,C,D,E,F,I,J,K,L,M and X, and forms trimeric complexes. It depends on PSI electron transfer chain: 5 chlorophyll a, 1 chlorophyll a', 2 phylloquinones and 3 4Fe-4S clusters. PSI core antenna: 90 chlorophyll a, 22 carotenoids, 3 phospholipids and 1 galactolipid. P700 is a chlorophyll a/chlorophyll a' dimer, A0 is one or more chlorophyll a, A1 is one or both phylloquinones and FX is a shared 4Fe-4S iron-sulfur center. as a cofactor.

It is found in the cellular thylakoid membrane. The enzyme catalyses reduced [plastocyanin] + hnu + oxidized [2Fe-2S]-[ferredoxin] = oxidized [plastocyanin] + reduced [2Fe-2S]-[ferredoxin]. In terms of biological role, psaA and PsaB bind P700, the primary electron donor of photosystem I (PSI), as well as the electron acceptors A0, A1 and FX. PSI is a plastocyanin/cytochrome c6-ferredoxin oxidoreductase, converting photonic excitation into a charge separation, which transfers an electron from the donor P700 chlorophyll pair to the spectroscopically characterized acceptors A0, A1, FX, FA and FB in turn. Oxidized P700 is reduced on the lumenal side of the thylakoid membrane by plastocyanin or cytochrome c6. The protein is Photosystem I P700 chlorophyll a apoprotein A2 of Synechococcus sp. (strain CC9605).